We begin with the raw amino-acid sequence, 499 residues long: C2H2-type transcription factor RPN4 (499 aa).

The tract at residues 329-397 (QTTKKDNSKP…TTKSTHTHSK (69 aa)) is disordered. The span at 331-344 (TKKDNSKPVEKTVV) shows a compositional bias: basic and acidic residues. The span at 345 to 363 (EKTSSVTKAGSNHSRSTLA) shows a compositional bias: polar residues. A C2H2-type zinc finger spans residues 405–436 (FVCELVNSVTNEVCGAQFSRTYDLTRHQNTIH).

It is found in the nucleus. Transcription factor that acts as a transcriptional activator of a number of genes encoding proteasomal subunits. Plays a role in ergosterol and plasma membrane homeostasis, and subsequent azole resistance. Regulates the expression of 212 genes, activating 80 genes and repressing, likely in an indirect fashion, 132 genes. Targets comprise several proteasome and ergosterol biosynthesis genes, including ERG1, ERG2, ERG3, and ERG11. Directly regulates ERG11 expression through the 3'-TTGCAAA-5' binding motif. The polypeptide is C2H2-type transcription factor RPN4 (Candida glabrata (strain ATCC 2001 / BCRC 20586 / JCM 3761 / NBRC 0622 / NRRL Y-65 / CBS 138) (Yeast)).